The chain runs to 512 residues: Cytochrome P450 77A4 (512 aa).

A helical membrane pass occupies residues 9–29 (PTSLDFTFFAIIISGFVFIIT). Residue C456 coordinates heme.

This sequence belongs to the cytochrome P450 family. Heme is required as a cofactor.

It is found in the membrane. Catalyzes the epoxidation of physiological unsaturated fatty acids in vitro. Can use laurate, oleate, linoleate, linolenate and vernolate as substrate. The chain is Cytochrome P450 77A4 (CYP77A4) from Arabidopsis thaliana (Mouse-ear cress).